A 363-amino-acid polypeptide reads, in one-letter code: Homeobox protein Hox-A2 (363 aa).

Disordered regions lie at residues 23-133 and 183-216; these read TSFP…SRRL and MKHKRQTQCKENQNGDGKFKNLEDSGQTEDDEEK. Polar residues-rich tracts occupy residues 31-46 and 55-78; these read TFQSSSIKNSTLSHST and TIPSLNPSSHPRQSRPKQSPNGTS. An Antp-type hexapeptide motif is present at residues 88-93; that stretch reads EYPWMK. The homeobox DNA-binding region spans 130–189; sequence SRRLRTAYTNTQLLELEKEFHFNKYLCRPRRVEIAALLDLTERQVKVWFQNRRMKHKRQT.

Belongs to the Antp homeobox family. Proboscipedia subfamily.

The protein resides in the nucleus. Sequence-specific transcription factor which is part of a developmental regulatory system that provides cells with specific positional identities on the anterior-posterior axis. This is Homeobox protein Hox-A2 (HOXA2) from Heterodontus francisci (Horn shark).